Here is a 109-residue protein sequence, read N- to C-terminus: Putative RNase MJ1380 (109 aa).

Active-site residues include R76 and H81. The short motif at 76 to 83 (RNILIHKY) is the RX(4)HXY motif element. At Y83 the chain carries O-di-AMP-tyrosine.

It belongs to the HepT RNase toxin family. In terms of assembly, homodimer, probably forms a complex with cognate antitoxin MJ1379. In terms of processing, modified by cognate antitoxin MJ1379; probably at least 2 successive AMPylation events occur on Tyr-83.

In terms of biological role, probable toxic component of a putative type VII toxin-antitoxin (TA) system, probably an RNase. Probably neutralized by cognate antitoxin MJ1379. Neutralization may be due to AMPylation by antitoxin MJ1379. This is Putative RNase MJ1380 from Methanocaldococcus jannaschii (strain ATCC 43067 / DSM 2661 / JAL-1 / JCM 10045 / NBRC 100440) (Methanococcus jannaschii).